A 533-amino-acid polypeptide reads, in one-letter code: GMP synthase [glutamine-hydrolyzing] (533 aa).

The Glutamine amidotransferase type-1 domain occupies 25–215 (SIVIFDFGSQ…VFNICKCHAN (191 aa)). Cys-102 functions as the Nucleophile in the catalytic mechanism. Residues His-189 and Glu-191 contribute to the active site. Positions 216–408 (WTMGNYIQES…LGLPDEMIWR (193 aa)) constitute a GMPS ATP-PPase domain. Residue 243-249 (SGGVDSA) participates in ATP binding.

In terms of assembly, homodimer.

It catalyses the reaction XMP + L-glutamine + ATP + H2O = GMP + L-glutamate + AMP + diphosphate + 2 H(+). Its pathway is purine metabolism; GMP biosynthesis; GMP from XMP (L-Gln route): step 1/1. Functionally, catalyzes the synthesis of GMP from XMP. This chain is GMP synthase [glutamine-hydrolyzing], found in Dehalococcoides mccartyi (strain ATCC BAA-2266 / KCTC 15142 / 195) (Dehalococcoides ethenogenes (strain 195)).